A 969-amino-acid chain; its full sequence is RNA polymerase-associated protein RapA (969 aa).

A Helicase ATP-binding domain is found at 164 to 334 (EVGRRHAPRV…FARLRLLDPD (171 aa)). 177-184 (DEVGLGKT) lines the ATP pocket. The short motif at 280 to 283 (DEAH) is the DEAH box element. The Helicase C-terminal domain maps to 492–686 (RVNWLLEKVK…ELKSQLEQGR (195 aa)).

It belongs to the SNF2/RAD54 helicase family. RapA subfamily. As to quaternary structure, interacts with the RNAP. Has a higher affinity for the core RNAP than for the holoenzyme. Its ATPase activity is stimulated by binding to RNAP.

Its function is as follows. Transcription regulator that activates transcription by stimulating RNA polymerase (RNAP) recycling in case of stress conditions such as supercoiled DNA or high salt concentrations. Probably acts by releasing the RNAP, when it is trapped or immobilized on tightly supercoiled DNA. Does not activate transcription on linear DNA. Probably not involved in DNA repair. The polypeptide is RNA polymerase-associated protein RapA (Vibrio parahaemolyticus serotype O3:K6 (strain RIMD 2210633)).